The following is a 70-amino-acid chain: Small ribosomal subunit protein bS21 (70 aa).

The tract at residues 39–70 (EKPTTERKRKKAAAVSRTRKRLRSQMLPKKLY) is disordered. Over residues 45–61 (RKRKKAAAVSRTRKRLR) the composition is skewed to basic residues.

It belongs to the bacterial ribosomal protein bS21 family.

In Ralstonia nicotianae (strain ATCC BAA-1114 / GMI1000) (Ralstonia solanacearum), this protein is Small ribosomal subunit protein bS21.